The chain runs to 778 residues: Ubiquitin thioesterase trabid (778 aa).

RanBP2-type zinc fingers lie at residues 5 to 36 (KDDAQKWKCETCTYENYPSSLKCTMCQASKPL) and 89 to 118 (DSEKWPCKVCTYLNWPRSLRCVQCCTKRGG). Residues 187 to 197 (ASHNQSQSQHR) are compositionally biased toward polar residues. The disordered stretch occupies residues 187 to 226 (ASHNQSQSQHRQPVLQQQMQLQLQPQQQRESSSSAAVPPQ). The span at 198–226 (QPVLQQQMQLQLQPQQQRESSSSAAVPPQ) shows a compositional bias: low complexity. The RanBP2-type 3 zinc-finger motif lies at 232–261 (YVSKWACNSCTYENWPRSIKCSMCGKTRER). The segment at 265 to 290 (GSQNDLHASSSLNSQEENQQQLQQPN) is disordered. Positions 273–288 (SSSLNSQEENQQQLQQ) are enriched in low complexity. Positions 507-665 (MFVLWNRSAG…RGHFSALVPM (159 aa)) constitute an OTU domain. Cys518 (nucleophile) is an active-site residue. His658 functions as the Proton acceptor in the catalytic mechanism. Phosphoserine occurs at positions 770, 771, and 775.

It belongs to the peptidase C64 family. As to quaternary structure, interacts with Apc.

The catalysed reaction is Thiol-dependent hydrolysis of ester, thioester, amide, peptide and isopeptide bonds formed by the C-terminal Gly of ubiquitin (a 76-residue protein attached to proteins as an intracellular targeting signal).. Its function is as follows. Positive regulator of the Wnt signaling pathway. Specifically cleaves 'Lys-63'-linked ubiquitin chains. May act by deubiquitinating APC protein, a negative regulator of Wnt-mediated transcription. Required for an efficient wg response, but not for other signaling responses, in the eye. This chain is Ubiquitin thioesterase trabid (trbd), found in Drosophila melanogaster (Fruit fly).